Here is a 1078-residue protein sequence, read N- to C-terminus: Cell wall acid trehalase ATC1 (1078 aa).

Residues 1-54 form the signal peptide; the sequence is MAANSSFFLADNCAPHNQSFIQFCIHAASKKKGRIALMCLANLFLLFSFHLLYA. N-linked (GlcNAc...) asparagine glycosylation is found at Asn-4, Asn-17, Asn-150, Asn-184, Asn-242, Asn-287, Asn-301, and Asn-350. 478 to 479 is a substrate binding site; sequence WD. Asn-532, Asn-591, and Asn-601 each carry an N-linked (GlcNAc...) asparagine glycan. Glu-607 acts as the Proton donor in catalysis. Residues Asn-661 and Asn-670 are each glycosylated (N-linked (GlcNAc...) asparagine). 676 to 677 contacts substrate; the sequence is KQ. N-linked (GlcNAc...) asparagine glycans are attached at residues Asn-829, Asn-837, Asn-904, Asn-922, Asn-931, Asn-946, Asn-1003, and Asn-1037.

It belongs to the glycosyl hydrolase 65 family.

The protein localises to the secreted. It is found in the cell wall. It carries out the reaction alpha,alpha-trehalose + H2O = alpha-D-glucose + beta-D-glucose. Cell wall acid trehalase that catalyzes hydrolysis of the disaccharide trehalose and required for growth on trehalose as carbon source. Plays a role in dimorphic conversion and virulence. The protein is Cell wall acid trehalase ATC1 (ATC1) of Candida albicans (strain SC5314 / ATCC MYA-2876) (Yeast).